Reading from the N-terminus, the 275-residue chain is Methylesterase 10 (275 aa).

Catalysis depends on Ser-96, which acts as the Acyl-ester intermediate. Active-site charge relay system residues include Asp-225 and His-253.

It belongs to the AB hydrolase superfamily. Methylesterase family.

It carries out the reaction methyl (-)-jasmonate + H2O = jasmonate + methanol + H(+). It functions in the pathway plant hormone biosynthesis. It participates in lipid metabolism; oxylipin biosynthesis. In terms of biological role, methylesterase shown to have methyl jasmonate (MeJA) esterase activity in vitro. This chain is Methylesterase 10, found in Arabidopsis thaliana (Mouse-ear cress).